The following is a 519-amino-acid chain: MTPMTVLISILLTLLGLVVGYYVRKTIAEAKIAGARGAAEQILEDAKRDAEALKKEALLEAKDEIHTLRIDAEQEVRERRNELQKQENRLLQKEENLDRKHEGIDKREAMLEKKDHSLNERQQHIEEMESKVDEMIRMQQSELERISSLTRDEAKQIILDRVENELSHDIAIMTKETENRAKEEADKKAKNILSLALQRCAADHVAETTVSVVNLPNDEMKGRIIGREGRNIRTLETLTGIDLIIDDTPEAVILSGFDPIRRETARIALDKLVQDGRIHPARIEEMVEKSRREVDDYIREMGEQTTFEVGVHGLHPDLIKILGRLKFRTSYGQNVLKHSMEVAFLAGLMASELGEDAKLAKRAGLLHDIGKAIDHEVEGSHVEIGVELATKYKEHPVVINSIASHHGDEEPTSIIAVLVAAADALSAARPGARSETLENYIRRLEKLEEISESYEGVEKSFAIQAGREVRIMVKPDSINDLEAHRLARDIRKRIEDELDYPGHIKVTVIRETRAVEYAK.

The helical transmembrane segment at 3–23 threads the bilayer; the sequence is PMTVLISILLTLLGLVVGYYV. Residues 209–272 enclose the KH domain; the sequence is TVSVVNLPND…ETARIALDKL (64 aa). One can recognise an HD domain in the interval 335 to 428; it reads VLKHSMEVAF…VAAADALSAA (94 aa).

This sequence belongs to the RNase Y family.

Its subcellular location is the cell membrane. Endoribonuclease that initiates mRNA decay. This Bacillus velezensis (strain DSM 23117 / BGSC 10A6 / LMG 26770 / FZB42) (Bacillus amyloliquefaciens subsp. plantarum) protein is Ribonuclease Y.